A 270-amino-acid polypeptide reads, in one-letter code: Type III pantothenate kinase (270 aa).

Residue 16 to 23 (EIGNTTAM) participates in ATP binding. Residues Tyr106 and 113–116 (GADR) each bind substrate. The Proton acceptor role is filled by Asp115. Asp136 provides a ligand contact to K(+). Residue Thr139 participates in ATP binding. Residue Thr191 coordinates substrate.

The protein belongs to the type III pantothenate kinase family. In terms of assembly, homodimer. The cofactor is NH4(+). K(+) serves as cofactor.

Its subcellular location is the cytoplasm. It carries out the reaction (R)-pantothenate + ATP = (R)-4'-phosphopantothenate + ADP + H(+). The protein operates within cofactor biosynthesis; coenzyme A biosynthesis; CoA from (R)-pantothenate: step 1/5. In terms of biological role, catalyzes the phosphorylation of pantothenate (Pan), the first step in CoA biosynthesis. In Chlorobium luteolum (strain DSM 273 / BCRC 81028 / 2530) (Pelodictyon luteolum), this protein is Type III pantothenate kinase.